Reading from the N-terminus, the 80-residue chain is Gamma-conotoxin PnVIIA (80 aa).

An N-terminal signal peptide occupies residues 1–19; the sequence is MEKLTILLLVAAVLMSTQA. Residues 20 to 43 constitute a propeptide that is removed on maturation; it reads QNQEQRQQAKINFLSKRKPSAERW. 3 disulfide bridges follow: cysteine 47-cysteine 61, cysteine 54-cysteine 65, and cysteine 60-cysteine 70. Glutamate 59 is modified (4-carboxyglutamate). Glutamate 71 bears the 4-carboxyglutamate mark. Proline 76 carries the post-translational modification 4-hydroxyproline. A propeptide spanning residues 78 to 80 is cleaved from the precursor; that stretch reads FGA.

In terms of tissue distribution, expressed by the venom duct.

Its subcellular location is the secreted. Its function is as follows. Gamma-conotoxins may act on voltage-gated non-specific cation pacemaker channels (HCN). Triggers depolarization and firing of action potential bursts in the caudodorsal neurons of lymnaea. This effect is due to activation or enhancement of a slow inward cation current that may underlie endogenous bursting activity of these neurons. In Conus pennaceus (Feathered cone), this protein is Gamma-conotoxin PnVIIA.